We begin with the raw amino-acid sequence, 141 residues long: Hemoglobin subunit alpha (141 aa).

The 141-residue stretch at 1–141 (VLSAADKGNV…VSTVLTSKYR (141 aa)) folds into the Globin domain. Ser3 carries the phosphoserine modification. N6-succinyllysine is present on residues Lys7 and Lys11. Lys16 carries the post-translational modification N6-acetyllysine; alternate. Residue Lys16 is modified to N6-succinyllysine; alternate. Tyr24 bears the Phosphotyrosine mark. Ser35 carries the phosphoserine modification. Lys40 carries the post-translational modification N6-succinyllysine. His58 provides a ligand contact to O2. Heme b is bound at residue His87. Ser102 is subject to Phosphoserine. Thr108 carries the phosphothreonine modification. Phosphoserine occurs at positions 124 and 131. Thr134 and Thr137 each carry phosphothreonine. Ser138 bears the Phosphoserine mark.

This sequence belongs to the globin family. As to quaternary structure, heterotetramer of two alpha chains and two beta chains. Red blood cells.

Involved in oxygen transport from the lung to the various peripheral tissues. Its function is as follows. Hemopressin acts as an antagonist peptide of the cannabinoid receptor CNR1. Hemopressin-binding efficiently blocks cannabinoid receptor CNR1 and subsequent signaling. In Macrotus californicus (Californian leaf-nosed bat), this protein is Hemoglobin subunit alpha (HBA).